Consider the following 146-residue polypeptide: 3-hydroxyacyl-[acyl-carrier-protein] dehydratase FabZ (146 aa).

His-49 is an active-site residue.

It belongs to the thioester dehydratase family. FabZ subfamily.

Its subcellular location is the cytoplasm. The catalysed reaction is a (3R)-hydroxyacyl-[ACP] = a (2E)-enoyl-[ACP] + H2O. Its function is as follows. Involved in unsaturated fatty acids biosynthesis. Catalyzes the dehydration of short chain beta-hydroxyacyl-ACPs and long chain saturated and unsaturated beta-hydroxyacyl-ACPs. The chain is 3-hydroxyacyl-[acyl-carrier-protein] dehydratase FabZ from Pseudomonas fluorescens (strain Pf0-1).